The primary structure comprises 36 residues: uncharacterized protein (36 aa).

This is an uncharacterized protein from Halalkalibacterium halodurans (strain ATCC BAA-125 / DSM 18197 / FERM 7344 / JCM 9153 / C-125) (Bacillus halodurans).